We begin with the raw amino-acid sequence, 348 residues long: Dihydroorotase (348 aa).

Zn(2+)-binding residues include histidine 17 and histidine 19. Substrate-binding positions include 19-21 (HLR) and asparagine 45. 3 residues coordinate Zn(2+): lysine 103, histidine 140, and histidine 178. Lysine 103 carries the post-translational modification N6-carboxylysine. Residue histidine 140 coordinates substrate. Leucine 223 provides a ligand contact to substrate. Residue aspartate 251 coordinates Zn(2+). Residue aspartate 251 is part of the active site. Positions 255 and 267 each coordinate substrate.

It belongs to the metallo-dependent hydrolases superfamily. DHOase family. Class II DHOase subfamily. In terms of assembly, homodimer. It depends on Zn(2+) as a cofactor.

It catalyses the reaction (S)-dihydroorotate + H2O = N-carbamoyl-L-aspartate + H(+). It participates in pyrimidine metabolism; UMP biosynthesis via de novo pathway; (S)-dihydroorotate from bicarbonate: step 3/3. Catalyzes the reversible cyclization of carbamoyl aspartate to dihydroorotate. This is Dihydroorotase from Escherichia coli O6:K15:H31 (strain 536 / UPEC).